Here is a 222-residue protein sequence, read N- to C-terminus: MADS-box transcription factor 26 (222 aa).

Residues 1 to 61 (MARGKVQLRR…GKLYDLATTG (61 aa)) enclose the MADS-box domain. The K-box domain occupies 85 to 176 (RMDPKQEAMV…QEKIVEQNGL (92 aa)).

It localises to the nucleus. Probable transcription factor. This Oryza sativa subsp. indica (Rice) protein is MADS-box transcription factor 26 (MADS26).